A 661-amino-acid chain; its full sequence is UvrABC system protein B (661 aa).

A Helicase ATP-binding domain is found at 25–182 (AGLNSKKRSQ…NDLINLQYKR (158 aa)). 38–45 (GITGSGKT) serves as a coordination point for ATP. The Beta-hairpin motif lies at 91–114 (YYDYYQPEAYIARTDTFIEKDSSI). A Helicase C-terminal domain is found at 430–592 (QVEDLISEIQ…IIPKTINRAI (163 aa)). Positions 621–656 (KANINKLNKEMLKAASNLEFEQAAKLRDQLKTLEAA) constitute a UVR domain.

It belongs to the UvrB family. Forms a heterotetramer with UvrA during the search for lesions. Interacts with UvrC in an incision complex.

The protein localises to the cytoplasm. Functionally, the UvrABC repair system catalyzes the recognition and processing of DNA lesions. A damage recognition complex composed of 2 UvrA and 2 UvrB subunits scans DNA for abnormalities. Upon binding of the UvrA(2)B(2) complex to a putative damaged site, the DNA wraps around one UvrB monomer. DNA wrap is dependent on ATP binding by UvrB and probably causes local melting of the DNA helix, facilitating insertion of UvrB beta-hairpin between the DNA strands. Then UvrB probes one DNA strand for the presence of a lesion. If a lesion is found the UvrA subunits dissociate and the UvrB-DNA preincision complex is formed. This complex is subsequently bound by UvrC and the second UvrB is released. If no lesion is found, the DNA wraps around the other UvrB subunit that will check the other stand for damage. The protein is UvrABC system protein B of Rickettsia akari (strain Hartford).